The sequence spans 238 residues: Ribonuclease PH (238 aa).

Residues R86 and 124 to 126 contribute to the phosphate site; that span reads GTR.

Belongs to the RNase PH family. In terms of assembly, homohexameric ring arranged as a trimer of dimers.

The catalysed reaction is tRNA(n+1) + phosphate = tRNA(n) + a ribonucleoside 5'-diphosphate. Phosphorolytic 3'-5' exoribonuclease that plays an important role in tRNA 3'-end maturation. Removes nucleotide residues following the 3'-CCA terminus of tRNAs; can also add nucleotides to the ends of RNA molecules by using nucleoside diphosphates as substrates, but this may not be physiologically important. Probably plays a role in initiation of 16S rRNA degradation (leading to ribosome degradation) during starvation. In Geotalea uraniireducens (strain Rf4) (Geobacter uraniireducens), this protein is Ribonuclease PH.